Here is a 234-residue protein sequence, read N- to C-terminus: Enolase-phosphatase E1 (234 aa).

Mg(2+) contacts are provided by D10 and E12. Substrate is bound by residues 125-126 (SS) and K162. D188 contacts Mg(2+).

Belongs to the HAD-like hydrolase superfamily. MasA/MtnC family. Monomer. The cofactor is Mg(2+).

It is found in the cytoplasm. Its subcellular location is the nucleus. It carries out the reaction 5-methylsulfanyl-2,3-dioxopentyl phosphate + H2O = 1,2-dihydroxy-5-(methylsulfanyl)pent-1-en-3-one + phosphate. It participates in amino-acid biosynthesis; L-methionine biosynthesis via salvage pathway; L-methionine from S-methyl-5-thio-alpha-D-ribose 1-phosphate: step 3/6. It functions in the pathway amino-acid biosynthesis; L-methionine biosynthesis via salvage pathway; L-methionine from S-methyl-5-thio-alpha-D-ribose 1-phosphate: step 4/6. Bifunctional enzyme that catalyzes the enolization of 2,3-diketo-5-methylthiopentyl-1-phosphate (DK-MTP-1-P) into the intermediate 2-hydroxy-3-keto-5-methylthiopentenyl-1-phosphate (HK-MTPenyl-1-P), which is then dephosphorylated to form the acireductone 1,2-dihydroxy-3-keto-5-methylthiopentene (DHK-MTPene). This Sordaria macrospora (strain ATCC MYA-333 / DSM 997 / K(L3346) / K-hell) protein is Enolase-phosphatase E1.